The sequence spans 730 residues: Nitrogen fixation protein FixI (730 aa).

Over 1-101 (MHVTRDFSHY…AEVAEVAESR (101 aa)) the chain is Cytoplasmic. The 67-residue stretch at 19–85 (KHIDLAVEGV…RLEELGYKAY (67 aa)) folds into the HMA domain. Residues Cys30 and Cys33 each coordinate a metal cation. The chain crosses the membrane as a helical span at residues 102-123 (FLLRCLGVAAFATMNVMMLSIP). The Extracellular portion of the chain corresponds to 124-138 (VWSGNVSDMLPEQRD). Residues 139–162 (FFHWLSALIALPAAAYAGQPFFRS) form a helical membrane-spanning segment. At 163–168 (AWRALS) the chain is on the cytoplasmic side. The chain crosses the membrane as a helical span at residues 169 to 190 (AKTTNMDVPISIGVILALGMSV). Residues 191–202 (VETIHHAEHAYF) are Extracellular-facing. Residues 203–223 (DAAIMLLTFLLVGRFLDQNMR) traverse the membrane as a helical segment. The Cytoplasmic segment spans residues 224–352 (RRTRAVAGNL…RSRYMRLADR (129 aa)). The chain crosses the membrane as a helical span at residues 353–375 (ASRLYAPVVHATALITILGWVIA). Over 376 to 382 (GASWHDA) the chain is Extracellular. A helical membrane pass occupies residues 383 to 400 (IVTGVAVLIITCPCALGL). Residues 401 to 676 (AIPTVQTVAS…DSARKALHLM (276 aa)) are Cytoplasmic-facing. The active-site 4-aspartylphosphate intermediate is the Asp438. Asp622 and Asp626 together coordinate Mg(2+). A helical transmembrane segment spans residues 677–696 (RQNLWLAIGYNVLAVPVAIS). Residues 697 to 701 (GVVTP) are Extracellular-facing. Residues 702-720 (LIAAAAMSGSSILVMLNSL) form a helical membrane-spanning segment. The Cytoplasmic segment spans residues 721 to 730 (RARSDSREIV).

It belongs to the cation transport ATPase (P-type) (TC 3.A.3) family. Type IB subfamily.

Its subcellular location is the cell membrane. It catalyses the reaction ATP + H2O = ADP + phosphate + H(+). Its function is as follows. FixI is a pump of a specific cation involved in symbiotic nitrogen fixation. The four proteins FixG, FixH, FixI, and FixS may participate in a membrane-bound complex coupling the FixI cation pump with a redox process catalyzed by FixG. The sequence is that of Nitrogen fixation protein FixI (fixI) from Bradyrhizobium diazoefficiens (strain JCM 10833 / BCRC 13528 / IAM 13628 / NBRC 14792 / USDA 110).